Reading from the N-terminus, the 227-residue chain is Orotidine 5'-phosphate decarboxylase (227 aa).

Substrate is bound by residues D8, K30, D59–T68, T118, R178, Q187, G207, and R208. The active-site Proton donor is K61.

It belongs to the OMP decarboxylase family. Type 1 subfamily. In terms of assembly, homodimer.

It catalyses the reaction orotidine 5'-phosphate + H(+) = UMP + CO2. It participates in pyrimidine metabolism; UMP biosynthesis via de novo pathway; UMP from orotate: step 2/2. Its function is as follows. Catalyzes the decarboxylation of orotidine 5'-monophosphate (OMP) to uridine 5'-monophosphate (UMP). This is Orotidine 5'-phosphate decarboxylase from Nitratiruptor sp. (strain SB155-2).